The sequence spans 202 residues: Acireductone dioxygenase (202 aa).

Residues His-110, His-112, Glu-116, and His-154 each contribute to the Fe(2+) site. His-110, His-112, Glu-116, and His-154 together coordinate Ni(2+).

It belongs to the acireductone dioxygenase (ARD) family. Monomer. The cofactor is Fe(2+). Ni(2+) serves as cofactor.

It carries out the reaction 1,2-dihydroxy-5-(methylsulfanyl)pent-1-en-3-one + O2 = 3-(methylsulfanyl)propanoate + CO + formate + 2 H(+). It catalyses the reaction 1,2-dihydroxy-5-(methylsulfanyl)pent-1-en-3-one + O2 = 4-methylsulfanyl-2-oxobutanoate + formate + 2 H(+). It participates in amino-acid biosynthesis; L-methionine biosynthesis via salvage pathway; L-methionine from S-methyl-5-thio-alpha-D-ribose 1-phosphate: step 5/6. Functionally, catalyzes 2 different reactions between oxygen and the acireductone 1,2-dihydroxy-3-keto-5-methylthiopentene (DHK-MTPene) depending upon the metal bound in the active site. Fe-containing acireductone dioxygenase (Fe-ARD) produces formate and 2-keto-4-methylthiobutyrate (KMTB), the alpha-ketoacid precursor of methionine in the methionine recycle pathway. Ni-containing acireductone dioxygenase (Ni-ARD) produces methylthiopropionate, carbon monoxide and formate, and does not lie on the methionine recycle pathway. The chain is Acireductone dioxygenase from Synechococcus sp. (strain CC9311).